We begin with the raw amino-acid sequence, 349 residues long: tRNA-specific 2-thiouridylase MnmA (349 aa).

ATP contacts are provided by residues 7–14 and Leu-33; that span reads GLSGGVDS. The active-site Nucleophile is Cys-94. A disulfide bond links Cys-94 and Cys-193. Gly-119 provides a ligand contact to ATP. The segment at 143–145 is interaction with tRNA; sequence KDQ. Cys-193 functions as the Cysteine persulfide intermediate in the catalytic mechanism. The interaction with tRNA stretch occupies residues 298–299; the sequence is RY.

It belongs to the MnmA/TRMU family.

It is found in the cytoplasm. The enzyme catalyses S-sulfanyl-L-cysteinyl-[protein] + uridine(34) in tRNA + AH2 + ATP = 2-thiouridine(34) in tRNA + L-cysteinyl-[protein] + A + AMP + diphosphate + H(+). Functionally, catalyzes the 2-thiolation of uridine at the wobble position (U34) of tRNA, leading to the formation of s(2)U34. The sequence is that of tRNA-specific 2-thiouridylase MnmA from Rippkaea orientalis (strain PCC 8801 / RF-1) (Cyanothece sp. (strain PCC 8801)).